An 88-amino-acid polypeptide reads, in one-letter code: ATP synthase subunit c 1 (88 aa).

Transmembrane regions (helical) follow at residues 4–24 and 53–73; these read FTWV…GTAI and IGLA…MIIL.

It belongs to the ATPase C chain family. As to quaternary structure, F-type ATPases have 2 components, F(1) - the catalytic core - and F(0) - the membrane proton channel. F(1) has five subunits: alpha(3), beta(3), gamma(1), delta(1), epsilon(1). F(0) has three main subunits: a(1), b(2) and c(10-14). The alpha and beta chains form an alternating ring which encloses part of the gamma chain. F(1) is attached to F(0) by a central stalk formed by the gamma and epsilon chains, while a peripheral stalk is formed by the delta and b chains.

It localises to the cell inner membrane. Functionally, f(1)F(0) ATP synthase produces ATP from ADP in the presence of a proton or sodium gradient. F-type ATPases consist of two structural domains, F(1) containing the extramembraneous catalytic core and F(0) containing the membrane proton channel, linked together by a central stalk and a peripheral stalk. During catalysis, ATP synthesis in the catalytic domain of F(1) is coupled via a rotary mechanism of the central stalk subunits to proton translocation. Its function is as follows. Key component of the F(0) channel; it plays a direct role in translocation across the membrane. A homomeric c-ring of between 10-14 subunits forms the central stalk rotor element with the F(1) delta and epsilon subunits. In Syntrophotalea carbinolica (strain DSM 2380 / NBRC 103641 / GraBd1) (Pelobacter carbinolicus), this protein is ATP synthase subunit c 1.